A 45-amino-acid polypeptide reads, in one-letter code: MSKRTFQPNNRRRARTHGFRLRMRTRAGRSILSARRSKGRSQLSA.

Residues 26 to 45 (RAGRSILSARRSKGRSQLSA) are disordered.

It belongs to the bacterial ribosomal protein bL34 family.

The sequence is that of Large ribosomal subunit protein bL34 from Parafrankia sp. (strain EAN1pec).